The following is a 267-amino-acid chain: MIKEYLKKPSLSDVQLTRDTRNIPIGKVGVKDISYPIVVMDKNKSFQNTIARINMYVDLPHHFKGTHMSRFVEILNEYREEIALDKLELILSTMKEKLGASNAHLEMEFPYFVEKTAPVSRAKSLMEYTCTFSASLSDRFDFVLGIKVPVTSLCPCSKELSSYGAHNQRSIMTVQVRYSEFIWIEDLIDIIEECGSSPVYSLLKREDEKFVTERAYENPRFVEDMVREATVRLLNMQNISWFSVEAENFESIHKHSAYAAIERSRES.

It belongs to the GTP cyclohydrolase IV family.

The enzyme catalyses GTP + H2O = 7,8-dihydroneopterin 3'-triphosphate + formate + H(+). Its pathway is cofactor biosynthesis; 7,8-dihydroneopterin triphosphate biosynthesis; 7,8-dihydroneopterin triphosphate from GTP: step 1/1. In terms of biological role, converts GTP to 7,8-dihydroneopterin triphosphate. In Geobacter sp. (strain M21), this protein is GTP cyclohydrolase FolE2.